The sequence spans 489 residues: Dipeptide and tripeptide permease B (489 aa).

Topologically, residues Met1–Arg27 are cytoplasmic. A helical membrane pass occupies residues Phe28–Ser48. The Periplasmic segment spans residues Gln49 to Ala52. Residues Phe53 to Val73 form a helical membrane-spanning segment. Residues Gly74–Arg82 are Cytoplasmic-facing. The chain crosses the membrane as a helical span at residues Thr83 to Leu103. Residues Lys104–Glu106 lie on the Periplasmic side of the membrane. Residues Leu107–Ala127 form a helical membrane-spanning segment. Residues Ser128–Thr146 are Cytoplasmic-facing. A helical membrane pass occupies residues Leu147–Ala167. Over Glu168 to Gly171 the chain is Periplasmic. Residues Tyr172–Leu192 form a helical membrane-spanning segment. At Tyr193 to Lys212 the chain is on the cytoplasmic side. Transmembrane regions (helical) follow at residues Asn213–His233 and Asn234–Phe254. The Cytoplasmic portion of the chain corresponds to Arg255–Lys267. A helical transmembrane segment spans residues Met268–Met288. At Pro289–Pro311 the chain is on the periplasmic side. The chain crosses the membrane as a helical span at residues Val312–Leu332. Over Tyr333–Thr350 the chain is Cytoplasmic. Residues Val351–Ala371 traverse the membrane as a helical segment. Residues Asp372–Gly375 lie on the Periplasmic side of the membrane. Residues Leu376 to Ile396 form a helical membrane-spanning segment. Residues Ser397–Met419 are Cytoplasmic-facing. A helical transmembrane segment spans residues Trp420–Ile440. Residues Pro441–Asn456 lie on the Periplasmic side of the membrane. Residues Val457–Pro477 traverse the membrane as a helical segment. Residues Leu478–Ala489 are Cytoplasmic-facing.

This sequence belongs to the major facilitator superfamily. Proton-dependent oligopeptide transporter (POT/PTR) (TC 2.A.17) family. DtpB subfamily.

The protein resides in the cell inner membrane. Its function is as follows. Proton-dependent permease that transports di- and tripeptides. The chain is Dipeptide and tripeptide permease B from Photorhabdus asymbiotica subsp. asymbiotica (strain ATCC 43949 / 3105-77) (Xenorhabdus luminescens (strain 2)).